The following is a 652-amino-acid chain: Acetyl-coenzyme A synthetase (652 aa).

Residues 189–192, T311, and N335 each bind CoA; that span reads RGGK. ATP contacts are provided by residues 387–389, 411–416, D500, and R515; these read GEP and DTWWQT. A CoA-binding site is contributed by S523. Residue R526 coordinates ATP. The Mg(2+) site is built by V537, H539, and V542. R584 contacts CoA. K609 carries the post-translational modification N6-acetyllysine.

This sequence belongs to the ATP-dependent AMP-binding enzyme family. Requires Mg(2+) as cofactor. Post-translationally, acetylated. Deacetylation by the SIR2-homolog deacetylase activates the enzyme.

It catalyses the reaction acetate + ATP + CoA = acetyl-CoA + AMP + diphosphate. Its function is as follows. Catalyzes the conversion of acetate into acetyl-CoA (AcCoA), an essential intermediate at the junction of anabolic and catabolic pathways. AcsA undergoes a two-step reaction. In the first half reaction, AcsA combines acetate with ATP to form acetyl-adenylate (AcAMP) intermediate. In the second half reaction, it can then transfer the acetyl group from AcAMP to the sulfhydryl group of CoA, forming the product AcCoA. The polypeptide is Acetyl-coenzyme A synthetase (Rhizobium rhizogenes (strain K84 / ATCC BAA-868) (Agrobacterium radiobacter)).